Here is a 186-residue protein sequence, read N- to C-terminus: Peptidyl-tRNA hydrolase (186 aa).

Y14 contacts tRNA. The active-site Proton acceptor is the H19. TRNA contacts are provided by F65, N67, and N113.

Belongs to the PTH family. Monomer.

Its subcellular location is the cytoplasm. The catalysed reaction is an N-acyl-L-alpha-aminoacyl-tRNA + H2O = an N-acyl-L-amino acid + a tRNA + H(+). Hydrolyzes ribosome-free peptidyl-tRNAs (with 1 or more amino acids incorporated), which drop off the ribosome during protein synthesis, or as a result of ribosome stalling. In terms of biological role, catalyzes the release of premature peptidyl moieties from peptidyl-tRNA molecules trapped in stalled 50S ribosomal subunits, and thus maintains levels of free tRNAs and 50S ribosomes. The sequence is that of Peptidyl-tRNA hydrolase from Limosilactobacillus reuteri (strain DSM 20016) (Lactobacillus reuteri).